A 519-amino-acid polypeptide reads, in one-letter code: Alkaline phosphatase, tissue-nonspecific isozyme (519 aa).

The N-terminal stretch at Met1–Ser16 is a signal peptide. Position 59 (Asp59) interacts with Mg(2+). Positions 59 and 109 each coordinate Zn(2+). Catalysis depends on Ser109, which acts as the Phosphoserine intermediate. Residues Cys138 and Cys200 are joined by a disulfide bond. Asn139 carries an N-linked (GlcNAc...) asparagine glycan. Position 172 (Thr172) interacts with Mg(2+). Residue Asn229 is glycosylated (N-linked (GlcNAc...) asparagine). Glu234 contributes to the Ca(2+) binding site. N-linked (GlcNAc...) asparagine glycosylation occurs at Asn278. Phe289 and Glu290 together coordinate Ca(2+). An N-linked (GlcNAc...) asparagine glycan is attached at Asn302. Asp305 contributes to the Ca(2+) binding site. Glu331 contributes to the Mg(2+) binding site. Residues Asp336, His340, Asp377, and His378 each contribute to the Zn(2+) site. A glycan (N-linked (GlcNAc...) asparagine) is linked at Asn429. His453 provides a ligand contact to Zn(2+). Residues Cys488 and Cys496 are joined by a disulfide bond. A lipid anchor (GPI-anchor amidated serine) is attached at Ser498. The propeptide at Ala499–Cys519 is removed in mature form.

Belongs to the alkaline phosphatase family. Homodimer. It depends on Mg(2+) as a cofactor. Zn(2+) serves as cofactor. Ca(2+) is required as a cofactor.

The protein resides in the cell membrane. Its subcellular location is the extracellular vesicle membrane. The catalysed reaction is a phosphate monoester + H2O = an alcohol + phosphate. The enzyme catalyses diphosphate + H2O = 2 phosphate + H(+). It catalyses the reaction pyridoxal 5'-phosphate + H2O = pyridoxal + phosphate. It carries out the reaction phosphoethanolamine + H2O = ethanolamine + phosphate. The catalysed reaction is ATP + H2O = ADP + phosphate + H(+). The enzyme catalyses ADP + H2O = AMP + phosphate + H(+). It catalyses the reaction AMP + H2O = adenosine + phosphate. In terms of biological role, alkaline phosphatase that metabolizes various phosphate compounds and plays a key role in skeletal mineralization and adaptive thermogenesis. Has broad substrate specificity and can hydrolyze a considerable variety of compounds: however, only a few substrates, such as diphosphate (inorganic pyrophosphate; PPi) and pyridoxal 5'-phosphate (PLP) are natural substrates. Plays an essential role in skeletal and dental mineralization via its ability to hydrolyze extracellular diphosphate, a potent mineralization inhibitor, to phosphate: it thereby promotes hydroxyapatite crystal formation and increases inorganic phosphate concentration. Catalyzes dephosphorylation of PLP to pyridoxal (PL), the transportable form of vitamin B6, in order to provide a sufficient amount of PLP in the brain, an essential cofactor for enzymes catalyzing the synthesis of diverse neurotransmitters. Additionally, also able to mediate ATP degradation in a stepwise manner to adenosine, thereby regulating the availability of ligands for purinergic receptors. Involved in the establishment and growth of feather germs. This is Alkaline phosphatase, tissue-nonspecific isozyme (ALPL) from Gallus gallus (Chicken).